A 635-amino-acid chain; its full sequence is Threonine--tRNA ligase (635 aa).

A TGS domain is found at 1–62; the sequence is MITITLPDGS…EHDAILRIIT (62 aa). The segment at 244-535 is catalytic; that stretch reads DHRKIGKAQD…LIEHYAGIWP (292 aa). Zn(2+)-binding residues include Cys-335, His-386, and His-512.

Belongs to the class-II aminoacyl-tRNA synthetase family. As to quaternary structure, homodimer. Requires Zn(2+) as cofactor.

It is found in the cytoplasm. The enzyme catalyses tRNA(Thr) + L-threonine + ATP = L-threonyl-tRNA(Thr) + AMP + diphosphate + H(+). Functionally, catalyzes the attachment of threonine to tRNA(Thr) in a two-step reaction: L-threonine is first activated by ATP to form Thr-AMP and then transferred to the acceptor end of tRNA(Thr). Also edits incorrectly charged L-seryl-tRNA(Thr). The polypeptide is Threonine--tRNA ligase (Xylella fastidiosa (strain M23)).